The sequence spans 157 residues: Endoribonuclease YbeY (157 aa).

Positions 116, 120, and 126 each coordinate Zn(2+).

It belongs to the endoribonuclease YbeY family. Zn(2+) serves as cofactor.

It localises to the cytoplasm. Functionally, single strand-specific metallo-endoribonuclease involved in late-stage 70S ribosome quality control and in maturation of the 3' terminus of the 16S rRNA. In Paenarthrobacter aurescens (strain TC1), this protein is Endoribonuclease YbeY.